Consider the following 674-residue polypeptide: Secretin GspD (674 aa).

The first 24 residues, 1 to 24, serve as a signal peptide directing secretion; that stretch reads MKYWLKKSSWLLAGSLLSTPLAMA. The interval 25–121 is N0; it reads NEFSASFKGT…VLSGEERANG (97 aa). Residues 123-187 form an N1 region; it reads EVITQVVAVK…EIIRRVDQAG (65 aa). Residues 188–261 are N2; the sequence is DKEIEVVELN…LIKQLDVEMA (74 aa). The tract at residues 264–338 is N3; the sequence is GNNRVVYLKY…AMLEVIGQLD (75 aa). A secretin region spans residues 343-612; it reads QVLIEALIVE…VFIKPTIIRD (270 aa). The segment at 395–417 is cap gate; it reads DTTQTKAVYDTNNNFLRNETTTT. Residues 614-674 form a s domain region; that stretch reads VTADGITQRK…AFIEQMEAKQ (61 aa).

This sequence belongs to the bacterial secretin family. GSP D subfamily. As to quaternary structure, forms a cylindrical channel with 15 subunits; unlike E.coli no 16-subunit channels are seen. The closed pentadeacameric channels are 195 Angstroms long and 145 Angstroms in diameter. Each subunit turns in a clock-wise manner around the channel.

The protein localises to the cell outer membrane. Involved in a type II secretion system (T2SS, formerly general secretion pathway, GSP) for the export of proteins. Required for secretion of cholera toxin through the outer membrane. This subunit forms the outer membrane channel. The sequence is that of Secretin GspD (epsD) from Vibrio cholerae serotype O1 (strain ATCC 39315 / El Tor Inaba N16961).